A 232-amino-acid chain; its full sequence is 5'-methylthioadenosine/S-adenosylhomocysteine nucleosidase (232 aa).

The active-site Proton acceptor is E12. Residues G78, I152, and 173 to 174 (ME) each bind substrate. Residue D197 is the Proton donor of the active site.

This sequence belongs to the PNP/UDP phosphorylase family. MtnN subfamily. Homodimer.

The enzyme catalyses S-adenosyl-L-homocysteine + H2O = S-(5-deoxy-D-ribos-5-yl)-L-homocysteine + adenine. The catalysed reaction is S-methyl-5'-thioadenosine + H2O = 5-(methylsulfanyl)-D-ribose + adenine. It catalyses the reaction 5'-deoxyadenosine + H2O = 5-deoxy-D-ribose + adenine. Its pathway is amino-acid biosynthesis; L-methionine biosynthesis via salvage pathway; S-methyl-5-thio-alpha-D-ribose 1-phosphate from S-methyl-5'-thioadenosine (hydrolase route): step 1/2. Catalyzes the irreversible cleavage of the glycosidic bond in both 5'-methylthioadenosine (MTA) and S-adenosylhomocysteine (SAH/AdoHcy) to adenine and the corresponding thioribose, 5'-methylthioribose and S-ribosylhomocysteine, respectively. Also cleaves 5'-deoxyadenosine, a toxic by-product of radical S-adenosylmethionine (SAM) enzymes, into 5-deoxyribose and adenine. Thus, is required for in vivo function of the radical SAM enzymes biotin synthase and lipoic acid synthase, that are inhibited by 5'-deoxyadenosine accumulation. The polypeptide is 5'-methylthioadenosine/S-adenosylhomocysteine nucleosidase (Pectobacterium carotovorum subsp. carotovorum (strain PC1)).